A 47-amino-acid chain; its full sequence is Photosystem II reaction center protein K (47 aa).

A propeptide spanning residues 1-10 (MALINFDLLA) is cleaved from the precursor. A helical transmembrane segment spans residues 26 to 46 (LPLIPLFFFLLVFVWQAAVGF).

It belongs to the PsbK family. As to quaternary structure, PSII is composed of 1 copy each of membrane proteins PsbA, PsbB, PsbC, PsbD, PsbE, PsbF, PsbH, PsbI, PsbJ, PsbK, PsbL, PsbM, PsbT, PsbX, PsbY, Psb30/Ycf12, peripheral proteins PsbO, CyanoQ (PsbQ), PsbU, PsbV and a large number of cofactors. It forms dimeric complexes.

Its subcellular location is the cellular thylakoid membrane. Functionally, one of the components of the core complex of photosystem II (PSII). PSII is a light-driven water:plastoquinone oxidoreductase that uses light energy to abstract electrons from H(2)O, generating O(2) and a proton gradient subsequently used for ATP formation. It consists of a core antenna complex that captures photons, and an electron transfer chain that converts photonic excitation into a charge separation. This is Photosystem II reaction center protein K from Prochlorococcus marinus (strain NATL2A).